The following is a 930-amino-acid chain: Translation initiation factor IF-2 (930 aa).

The span at 50-67 (FKPAAAPKVEAKPAAPKV) shows a compositional bias: low complexity. Disordered stretches follow at residues 50–217 (FKPA…SSEE) and 260–346 (EVVP…HELP). 2 stretches are compositionally biased toward basic and acidic residues: residues 68–90 (SAEK…EAKP) and 110–125 (FKAE…AERR). Residues 129-141 (KGNNRDQQQNGNR) are compositionally biased toward low complexity. Composition is skewed to basic and acidic residues over residues 157-167 (RDNRRFNDQAK) and 262-295 (VPEK…DGPR). Residues 309-318 (NQKNSNWNNN) are compositionally biased toward low complexity. Positions 337–346 (VTERKFHELP) are enriched in basic and acidic residues. The tr-type G domain occupies 432-599 (ERPPVVTIMG…TVLLVAEIQE (168 aa)). The G1 stretch occupies residues 441 to 448 (GHVDHGKT). 441 to 448 (GHVDHGKT) is a binding site for GTP. The G2 stretch occupies residues 466 to 470 (GITQH). Positions 487-490 (DTPG) are G3. GTP-binding positions include 487–491 (DTPGH) and 541–544 (NKID). The tract at residues 541–544 (NKID) is G4. Residues 577-579 (SAK) are G5.

Belongs to the TRAFAC class translation factor GTPase superfamily. Classic translation factor GTPase family. IF-2 subfamily.

It is found in the cytoplasm. Its function is as follows. One of the essential components for the initiation of protein synthesis. Protects formylmethionyl-tRNA from spontaneous hydrolysis and promotes its binding to the 30S ribosomal subunits. Also involved in the hydrolysis of GTP during the formation of the 70S ribosomal complex. In Streptococcus pneumoniae (strain P1031), this protein is Translation initiation factor IF-2.